A 455-amino-acid polypeptide reads, in one-letter code: Probable glycine dehydrogenase (decarboxylating) subunit 1 (455 aa).

It belongs to the GcvP family. N-terminal subunit subfamily. As to quaternary structure, the glycine cleavage system is composed of four proteins: P, T, L and H. In this organism, the P 'protein' is a heterodimer of two subunits.

It carries out the reaction N(6)-[(R)-lipoyl]-L-lysyl-[glycine-cleavage complex H protein] + glycine + H(+) = N(6)-[(R)-S(8)-aminomethyldihydrolipoyl]-L-lysyl-[glycine-cleavage complex H protein] + CO2. Its function is as follows. The glycine cleavage system catalyzes the degradation of glycine. The P protein binds the alpha-amino group of glycine through its pyridoxal phosphate cofactor; CO(2) is released and the remaining methylamine moiety is then transferred to the lipoamide cofactor of the H protein. The chain is Probable glycine dehydrogenase (decarboxylating) subunit 1 from Francisella tularensis subsp. tularensis (strain FSC 198).